A 357-amino-acid polypeptide reads, in one-letter code: Peptide chain release factor 1 (357 aa).

At glutamine 236 the chain carries N5-methylglutamine.

The protein belongs to the prokaryotic/mitochondrial release factor family. In terms of processing, methylated by PrmC. Methylation increases the termination efficiency of RF1.

It localises to the cytoplasm. In terms of biological role, peptide chain release factor 1 directs the termination of translation in response to the peptide chain termination codons UAG and UAA. This Mycobacterium marinum (strain ATCC BAA-535 / M) protein is Peptide chain release factor 1.